We begin with the raw amino-acid sequence, 1008 residues long: MIYEMMVMKRSANSRAQNNRRSERQRYYPYEPTESPSRPVSSLGNVPTIPPPAASTVDVPHYTSRPGSPTRPWSPNRVGNWARPPAPPSVASSQYERADLNGSPRPGTPSSRYGGSPRRPLPPAPLFSAPGGHDANIPINDAGDDDVFGGGGRTIDPNNRASMQSFMSESTIITDEKDAMSKVDLDDEMEETDEMVDPNIHYGPAPEKQSRRGVREAQMSTKEVQLINGELILECKIPTILHSFLPRRDDREFTHMRYTAVTCDPDDFTQRGYKLRQQIGSTMRETELLICITMYNEDEIGFTRTMHGVMQNITHLCSRSKSRTWGKDGWKKIVVCIIADGRKKVHPRTLNALAALGVYQEGIAKNVVNQKQVNAHVYEYTTQVSLDPDLKFKGAEKGIMPCQVLFCLKEHNKKKLNSHRWFFNAFGRALQPNICILLDVGTKPAPTALYHLWKAFDQNSNVAGAAGEIKAGKGKGMLGLLNPLVASQNFEYKMSNILDKPLESVFGYITVLPGALSAYRFFALQNDAEGNGPLNQYFKGETLHGQDADVFTANMYLAEDRILCWELVAKREERWVLKFVKSAVGETDVPDSIPEFISQRRRWLNGAFFAAVYSIVNAKQLWKTDHSLPRKILLQIEGAYQFMQLIFTYFGLANFYLVFYFIAGSLTDDKIDPFGHHIGKYIFVILRYACILVMCLQFIISMGNRPQGAKKLYLSGIIVYSIIMFYTIFCTMYLVVIEILARTGADTSLEVSDGLFVNIVMSLLSTVGLYFYASFLYLDPWHMFTSSAAYFIMLPSYICTLQVYAFCNTHDVSWGTKGDNVLNMDLGAARVVNGTTVQIEMPSEQLDIDSGYDAALRNLRDRVEVPETPITESQMQEDYYRAVRTYMVSIWMVANVILAMAISEVYGPDAGGTNIYLAIILWSVVVLALIRVIGSTTYAILLVVQKIVEGKTKFDAGNLANMSHVSGSSGGRSSTALKYGGGVSFKDKFAEAKWSAKRVAGKAMFWRK.

The interval 1–160 is disordered; the sequence is MIYEMMVMKR…GGRTIDPNNR (160 aa). Over residues 10–19 the composition is skewed to low complexity; that stretch reads RSANSRAQNN. Residues 34–45 are compositionally biased toward polar residues; it reads ESPSRPVSSLGN. An N-linked (GlcNAc...) asparagine glycan is attached at asparagine 312. The next 5 helical transmembrane spans lie at 642–662, 682–702, 717–737, 755–775, and 787–807; these read FMQLIFTYFGLANFYLVFYFI, IFVILRYACILVMCLQFIISM, IIVYSIIMFYTIFCTMYLVVI, LFVNIVMSLLSTVGLYFYASF, and SAAYFIMLPSYICTLQVYAFC. Asparagine 833 carries N-linked (GlcNAc...) asparagine glycosylation. A run of 2 helical transmembrane segments spans residues 887 to 907 and 910 to 930; these read MVSIWMVANVILAMAISEVYG and AGGTNIYLAIILWSVVVLALI. Asparagine 961 is a glycosylation site (N-linked (GlcNAc...) asparagine).

It belongs to the chitin synthase family. Class II subfamily.

It localises to the cell membrane. The catalysed reaction is [(1-&gt;4)-N-acetyl-beta-D-glucosaminyl](n) + UDP-N-acetyl-alpha-D-glucosamine = [(1-&gt;4)-N-acetyl-beta-D-glucosaminyl](n+1) + UDP + H(+). In terms of biological role, polymerizes chitin, a structural polymer of the cell wall and septum, by transferring the sugar moiety of UDP-GlcNAc to the non-reducing end of the growing chitin polymer. Involved in cell wall integrity and mycelial morphology. Plays an important role in septal growth or maintenance. Acts as a positive regulator of conidiation, cellular responses to oxidative stresses, and the production of malic acid. Negatively regulates the citric acid production. This Aspergillus niger (strain ATCC MYA-4892 / CBS 513.88 / FGSC A1513) protein is Chitin synthase C.